The chain runs to 460 residues: Cysteine--tRNA ligase (460 aa).

Zn(2+) is bound at residue Cys27. The short motif at 29-39 is the 'HIGH' region element; it reads PTVYDLIHVGN. Zn(2+) is bound by residues Cys207, His232, and Glu236. A 'KMSKS' region motif is present at residues 264 to 268; sequence KMSKS. Lys267 lines the ATP pocket.

The protein belongs to the class-I aminoacyl-tRNA synthetase family. As to quaternary structure, monomer. Zn(2+) is required as a cofactor.

Its subcellular location is the cytoplasm. It carries out the reaction tRNA(Cys) + L-cysteine + ATP = L-cysteinyl-tRNA(Cys) + AMP + diphosphate. The sequence is that of Cysteine--tRNA ligase (cysS) from Thermotoga maritima (strain ATCC 43589 / DSM 3109 / JCM 10099 / NBRC 100826 / MSB8).